Consider the following 182-residue polypeptide: Crossover junction endodeoxyribonuclease RuvC (182 aa).

Catalysis depends on residues Asp-7, Glu-69, and Asp-141. Mg(2+) contacts are provided by Asp-7, Glu-69, and Asp-141.

It belongs to the RuvC family. In terms of assembly, homodimer which binds Holliday junction (HJ) DNA. The HJ becomes 2-fold symmetrical on binding to RuvC with unstacked arms; it has a different conformation from HJ DNA in complex with RuvA. In the full resolvosome a probable DNA-RuvA(4)-RuvB(12)-RuvC(2) complex forms which resolves the HJ. Requires Mg(2+) as cofactor.

The protein localises to the cytoplasm. The catalysed reaction is Endonucleolytic cleavage at a junction such as a reciprocal single-stranded crossover between two homologous DNA duplexes (Holliday junction).. The RuvA-RuvB-RuvC complex processes Holliday junction (HJ) DNA during genetic recombination and DNA repair. Endonuclease that resolves HJ intermediates. Cleaves cruciform DNA by making single-stranded nicks across the HJ at symmetrical positions within the homologous arms, yielding a 5'-phosphate and a 3'-hydroxyl group; requires a central core of homology in the junction. The consensus cleavage sequence is 5'-(A/T)TT(C/G)-3'. Cleavage occurs on the 3'-side of the TT dinucleotide at the point of strand exchange. HJ branch migration catalyzed by RuvA-RuvB allows RuvC to scan DNA until it finds its consensus sequence, where it cleaves and resolves the cruciform DNA. This chain is Crossover junction endodeoxyribonuclease RuvC, found in Polaromonas sp. (strain JS666 / ATCC BAA-500).